A 104-amino-acid chain; its full sequence is Large ribosomal subunit protein uL24 (104 aa).

The protein belongs to the universal ribosomal protein uL24 family. In terms of assembly, part of the 50S ribosomal subunit.

Functionally, one of two assembly initiator proteins, it binds directly to the 5'-end of the 23S rRNA, where it nucleates assembly of the 50S subunit. Its function is as follows. One of the proteins that surrounds the polypeptide exit tunnel on the outside of the subunit. This Methylorubrum populi (strain ATCC BAA-705 / NCIMB 13946 / BJ001) (Methylobacterium populi) protein is Large ribosomal subunit protein uL24.